A 329-amino-acid polypeptide reads, in one-letter code: Glycerol-3-phosphate dehydrogenase [NAD(P)+] (329 aa).

NADPH is bound by residues S10, W11, R31, and K105. Sn-glycerol 3-phosphate contacts are provided by K105, G134, and S136. An NADPH-binding site is contributed by A138. K189, D242, S252, R253, and N254 together coordinate sn-glycerol 3-phosphate. K189 (proton acceptor) is an active-site residue. An NADPH-binding site is contributed by R253. NADPH is bound by residues V277 and E279.

Belongs to the NAD-dependent glycerol-3-phosphate dehydrogenase family.

It is found in the cytoplasm. It carries out the reaction sn-glycerol 3-phosphate + NAD(+) = dihydroxyacetone phosphate + NADH + H(+). The catalysed reaction is sn-glycerol 3-phosphate + NADP(+) = dihydroxyacetone phosphate + NADPH + H(+). Its pathway is membrane lipid metabolism; glycerophospholipid metabolism. In terms of biological role, catalyzes the reduction of the glycolytic intermediate dihydroxyacetone phosphate (DHAP) to sn-glycerol 3-phosphate (G3P), the key precursor for phospholipid synthesis. This chain is Glycerol-3-phosphate dehydrogenase [NAD(P)+], found in Neisseria gonorrhoeae (strain ATCC 700825 / FA 1090).